Here is a 520-residue protein sequence, read N- to C-terminus: Amine oxidase [flavin-containing] B (520 aa).

Residues 1-489 are Cytoplasmic-facing; it reads MNSKCDVVVV…TFLERHLPSV (489 aa). Lysine 52 is modified (N6-acetyllysine). Cysteine 397 is subject to S-8alpha-FAD cysteine. A helical; Anchor for type IV membrane protein membrane pass occupies residues 490-516; the sequence is PGLLRLIRLTTVVSAVALGFLAQKRGL. Residues 517–520 lie on the Mitochondrial intermembrane side of the membrane; the sequence is LLRI.

Belongs to the flavin monoamine oxidase family. In terms of assembly, monomer, homo- or heterodimer (containing two subunits of similar size). Each subunit contains a covalently bound flavin. Enzymatically active as monomer. The cofactor is FAD.

It localises to the mitochondrion outer membrane. It catalyses the reaction a secondary aliphatic amine + O2 + H2O = a primary amine + an aldehyde + H2O2. The catalysed reaction is (R)-adrenaline + O2 + H2O = (R)-3,4-dihydroxymandelaldehyde + methylamine + H2O2. The enzyme catalyses a primary methyl amine + O2 + H2O = an aldehyde + H2O2 + NH4(+). It carries out the reaction benzylamine + O2 + H2O = benzaldehyde + H2O2 + NH4(+). It catalyses the reaction dopamine + O2 + H2O = 3,4-dihydroxyphenylacetaldehyde + H2O2 + NH4(+). The catalysed reaction is tyramine + O2 + H2O = (4-hydroxyphenyl)acetaldehyde + H2O2 + NH4(+). The enzyme catalyses (R)-noradrenaline + O2 + H2O = (R)-3,4-dihydroxymandelaldehyde + H2O2 + NH4(+). It carries out the reaction 2-phenylethylamine + O2 + H2O = 2-phenylacetaldehyde + H2O2 + NH4(+). It catalyses the reaction N-acetylputrescine + O2 + H2O = 4-acetamidobutanal + H2O2 + NH4(+). Functionally, catalyzes the oxidative deamination of primary and some secondary amines such as neurotransmitters, and exogenous amines including the tertiary amine, neurotoxin 1-methyl-4-phenyl-1,2,3,6-tetrahydropyridine (MPTP), with concomitant reduction of oxygen to hydrogen peroxide and participates in the metabolism of neuroactive and vasoactive amines in the central nervous system and peripheral tissues. Preferentially degrades benzylamine and phenylethylamine. The protein is Amine oxidase [flavin-containing] B of Cavia porcellus (Guinea pig).